The primary structure comprises 493 residues: uncharacterized protein (493 aa).

Position 8–37 (8–37) interacts with FAD; that stretch reads DFLVVGGGTCGCVVAARLSEDPSATVMLLE. The active-site Proton acceptor is His429.

The protein belongs to the GMC oxidoreductase family. It depends on FAD as a cofactor.

This is an uncharacterized protein from Rhodococcus erythropolis (Arthrobacter picolinophilus).